The primary structure comprises 250 residues: Putative endonuclease (250 aa).

Its function is as follows. Putative endonuclease. The chain is Putative endonuclease from Escherichia coli (Enterobacteria phage T5).